The chain runs to 328 residues: Glutathionyl-hydroquinone reductase YqjG (328 aa).

C63 serves as the catalytic Nucleophile. Glutathione contacts are provided by residues W96, 130-133 (RVTV), and 148-149 (ES). A GST C-terminal domain is found at 172–296 (PPALQTKIDE…VNFDHIRNHY (125 aa)). Catalysis depends on Y195, which acts as the Proton donor/acceptor. A dimerization region spans residues 203–311 (QEAYDEAVAK…TINPTGIISI (109 aa)).

The protein belongs to the GST superfamily. Xi-class GSH transferase family. Homodimer.

The catalysed reaction is 2-(glutathione-S-yl)-hydroquinone + glutathione = hydroquinone + glutathione disulfide. Catalyzes glutathione (GSH)-dependent reduction of glutathionyl-hydroquinones (GS-HQs) to the corresponding hydroquinones. Can use a variety of GS-HQs as substrates, such as GS-p-hydroquinone (GS-HQ), GS-hydroxy-p-hydroquinone (GS-HHQ), GS-methyl-p-hydroquinone (GS-MHQ), GS-menadiol, and GS-trichloro-p-hydroquinone (GS-TriCH). Also displays GSH-dependent disulfide-bond reduction activity toward HED (2-hydroxyethyl disulfide), and is able to catalyze DMA (dimethylarsinate) reduction. Exhibits no GSH transferase activity with 1-chloro-2,4-dinitrobenzene (CDNB). This chain is Glutathionyl-hydroquinone reductase YqjG (yqjG), found in Escherichia coli (strain K12).